The primary structure comprises 567 residues: MAFVSEREIVRKIFSKKIDFTILAFFYISSIFFLLCSGVLFQYFTAAFTKGNCYECSMKLDYIKQFYFSLETAWYLISAVAVFIASVFIQHRIKAYLTLLAITWIVLTITDVALIHALDNIAMNNILLNILYNLFGAILLSLFMCLSNSLLFHLNKIKHIPMILSAMIPLVSAIIIAILITAVIYLLFARQAVEIEMDISEGSDIAYVGVKDNEESFGFLNDKKTDTPTYLDVIKNGSLIYNDTQGLSGADIYIVSGCYALPDLLRNVPLDAKKSFLNVKKLEITQKLPMMGFIQGESADVMPKAASRLSLSKQDDKFMLASSVTDSQIKFKSNNAQLMVAFAFMPITTNGILHDYTYDIIINDKKYKIENHVAPLSRLDKNKKMKCEYQQISDLTNTYNINANYLTGFLLVLKPDDIINYNNSPSVLLKTDFAFYKKTYQKLDKIYDDISNGKLSSLRATGISQFSINGKHLSLRPESEIIISEGSLYGLVNKSKKIKIYGTADLVFVDNKIMNLRKITYLQSKLEIFGSSIMDILKYIFGLGLLAISIKFIHSYFKNDVNENLFL.

6 helical membrane passes run 20–40 (FTIL…SGVL), 69–89 (SLET…SVFI), 95–115 (AYLT…VALI), 126–146 (ILLN…FMCL), 168–188 (IPLV…YLLF), and 528–548 (IFGS…LLAI).

The protein resides in the cell membrane. This is an uncharacterized protein from Escherichia coli (strain K12).